A 1015-amino-acid chain; its full sequence is MSSSYITDQGPGSGLRVPARSWLNSDAPSLSLNGDWRFRLLPTAPGTPGAGSVLATGETVEAVASESFDDSSWDTLAVPSHWVLAEDGKYGRPIYTNVQYPFPIDPPFVPDANPTGDYRRTFDVPDSWFESTTAALTLRFDGVESRYKVWVNGVEIGVGSGSRLAQEFDVSEALRPGKNLLVVRVHQWSAASYLEDQDQWWLPGIFRDVKLQARPVGGLTDVWLRTDWSGSGTITPEITADPAAFPVTLRVPELGLEVIWDSPADVAPVSIDAVEPWSAEVPRLYDASVSSAAESISLRLGFRTVKIVGDQFLVNGRKVIFHGVNRHETNADRGRVFDEASAREDLALMKRFNVNAIRTSHYPPHPRFLDLADELGFWVILECDLETHGFHALKWVGNPSDDPAWRDALVDRMERTVERDKNHASIVMWSLGNESGTGANLAAMAAWTHARDLSRPVHYEGDYTGAYTDVYSRMYSSIPETDSIGRNDSHALLLGCNAIESARQRTRPFILCEYVHAMGNGPGAIDQYEDLVDKYPRLHGGFVWEWRDHGIRTRTADGTEFFAYGGDFDEVIHDGNFVMDGMILSDSTPTPGLFEYKQIVSPIRLALTLNAEGNAGLTVANLRHTSDASDVVLRWRVEHNGTRVDAGELTTDGANGPLQAGDSLTLTLPTIVAAAEGETWLSVEAVLREATAWAPAGHPLSETQLDLSPAQPPLRVPRPASPIAGAAPVELGPATFDAGSLVTLAGLPVAGPRLELWRAPTDNDKGQGFGAYGPEDPWINSGRGVPAPSSAVVWQQAGLDRLTRRVEDVAALPQGLRVRSRYAAANSEHDVAVEENWQLSGDELWLRIDIAPSAGWDLVFPRIGVRLDLPSEVDGASWFGAGPRESYPDSLHSAVVGTHGGSLEELNVNYARPQETGHHSDVRWVELSRDGAPWLRIEADPDALGRRPGFSLAKNTAQEVALAPHPHELPESQHSYLYLDAAQHGLGSRACGPDVWPDFALRPEARTLVLRIRAA.

The active-site Proton donor is E434. E513 serves as the catalytic Nucleophile.

The protein belongs to the glycosyl hydrolase 2 family. Requires Mg(2+) as cofactor. Mn(2+) serves as cofactor.

It carries out the reaction Hydrolysis of terminal non-reducing beta-D-galactose residues in beta-D-galactosides.. The chain is Beta-galactosidase (lacZ) from Arthrobacter sp. (strain B7).